A 203-amino-acid polypeptide reads, in one-letter code: Endo-type membrane-bound lytic murein transglycosylase A (203 aa).

The N-terminal stretch at 1–15 is a signal peptide; it reads MKLRWFAFLVVLLAG. Cys-16 carries N-palmitoyl cysteine lipidation. Cys-16 carries S-diacylglycerol cysteine lipidation.

Belongs to the transglycosylase Slt family.

Its subcellular location is the cell outer membrane. The catalysed reaction is Endolytic cleavage of the (1-&gt;4)-beta-glycosidic linkage between N-acetylmuramic acid (MurNAc) and N-acetylglucosamine (GlcNAc) residues in peptidoglycan with concomitant formation of a 1,6-anhydrobond in the MurNAc residue.. Functionally, murein-degrading enzyme. May play a role in recycling of muropeptides during cell elongation and/or cell division. Preferentially cleaves at a distance of more than two disaccharide units from the ends of the glycan chain. In Escherichia fergusonii (strain ATCC 35469 / DSM 13698 / CCUG 18766 / IAM 14443 / JCM 21226 / LMG 7866 / NBRC 102419 / NCTC 12128 / CDC 0568-73), this protein is Endo-type membrane-bound lytic murein transglycosylase A.